A 344-amino-acid chain; its full sequence is N-acetyl-gamma-glutamyl-phosphate reductase (344 aa).

Cys-150 is a catalytic residue.

It belongs to the NAGSA dehydrogenase family. Type 1 subfamily.

The protein resides in the cytoplasm. The catalysed reaction is N-acetyl-L-glutamate 5-semialdehyde + phosphate + NADP(+) = N-acetyl-L-glutamyl 5-phosphate + NADPH + H(+). It functions in the pathway amino-acid biosynthesis; L-arginine biosynthesis; N(2)-acetyl-L-ornithine from L-glutamate: step 3/4. Catalyzes the NADPH-dependent reduction of N-acetyl-5-glutamyl phosphate to yield N-acetyl-L-glutamate 5-semialdehyde. This is N-acetyl-gamma-glutamyl-phosphate reductase from Pseudomonas fluorescens (strain Pf0-1).